Here is a 121-residue protein sequence, read N- to C-terminus: Small ribosomal subunit protein uS13 (121 aa).

Residues 88 to 121 (GMRHRRGLPVRGQHTKNNARTRKGKAVAIANKKK) form a disordered region.

This sequence belongs to the universal ribosomal protein uS13 family. Part of the 30S ribosomal subunit. Forms a loose heterodimer with protein S19. Forms two bridges to the 50S subunit in the 70S ribosome.

Located at the top of the head of the 30S subunit, it contacts several helices of the 16S rRNA. In the 70S ribosome it contacts the 23S rRNA (bridge B1a) and protein L5 of the 50S subunit (bridge B1b), connecting the 2 subunits; these bridges are implicated in subunit movement. Contacts the tRNAs in the A and P-sites. This Limosilactobacillus reuteri subsp. reuteri (strain JCM 1112) (Lactobacillus reuteri) protein is Small ribosomal subunit protein uS13.